The primary structure comprises 239 residues: Uridylate kinase (239 aa).

12–15 (KLSG) provides a ligand contact to ATP. The segment at 21 to 26 (GEQGFG) is involved in allosteric activation by GTP. Residue G55 coordinates UMP. The ATP site is built by G56 and R60. Residues D75 and 136 to 143 (TGNPYFST) each bind UMP. ATP-binding residues include T163, Y169, and D172.

This sequence belongs to the UMP kinase family. Homohexamer.

It localises to the cytoplasm. It carries out the reaction UMP + ATP = UDP + ADP. It participates in pyrimidine metabolism; CTP biosynthesis via de novo pathway; UDP from UMP (UMPK route): step 1/1. Allosterically activated by GTP. Inhibited by UTP. In terms of biological role, catalyzes the reversible phosphorylation of UMP to UDP. The protein is Uridylate kinase of Koribacter versatilis (strain Ellin345).